The following is a 195-amino-acid chain: Large ribosomal subunit protein uL5 (195 aa).

Belongs to the universal ribosomal protein uL5 family. In terms of assembly, part of the 50S ribosomal subunit; part of the 5S rRNA/L5/L18/L25 subcomplex. Contacts the 5S rRNA and the P site tRNA. Forms a bridge to the 30S subunit in the 70S ribosome.

Functionally, this is one of the proteins that bind and probably mediate the attachment of the 5S RNA into the large ribosomal subunit, where it forms part of the central protuberance. In the 70S ribosome it contacts protein S13 of the 30S subunit (bridge B1b), connecting the 2 subunits; this bridge is implicated in subunit movement. Contacts the P site tRNA; the 5S rRNA and some of its associated proteins might help stabilize positioning of ribosome-bound tRNAs. In Pelodictyon phaeoclathratiforme (strain DSM 5477 / BU-1), this protein is Large ribosomal subunit protein uL5.